The sequence spans 421 residues: Phosphatidylinositol 5-phosphate 4-kinase type-2 gamma (421 aa).

Ala-2 is modified (N-acetylalanine). Phosphoserine is present on Ser-26. The region spanning 43–420 (AADPLVGVFL…RFLDFIANIF (378 aa)) is the PIPK domain. Residues 69-75 (VMLLPDD) are required for interaction with PIP5K1A. Ser-349 is modified (phosphoserine).

In terms of assembly, interacts with PIP5K1A; the interaction inhibits PIP5K1A kinase activity. Phosphorylated, phosphorylation is induced by EGF.

It localises to the endoplasmic reticulum. The protein resides in the cytoplasm. It carries out the reaction a 1,2-diacyl-sn-glycero-3-phospho-(1D-myo-inositol-5-phosphate) + ATP = a 1,2-diacyl-sn-glycero-3-phospho-(1D-myo-inositol-4,5-bisphosphate) + ADP + H(+). The enzyme catalyses 1,2-dihexadecanoyl-sn-glycero-3-phospho-(1D-myo-inositol-5-phosphate) + ATP = 1,2-dihexadecanoyl-sn-glycero-3-phospho-(1D-myo-inositol-4,5-bisphosphate) + ADP + H(+). The catalysed reaction is 1,2-dihexadecanoyl-sn-glycero-3-phospho-(1D-myo-inositol-5-phosphate) + GTP = 1,2-dihexadecanoyl-sn-glycero-3-phospho-(1D-myo-inositol-4,5-bisphosphate) + GDP + H(+). In terms of biological role, phosphatidylinositol 5-phosphate 4-kinase with low enzymatic activity. May be a GTP sensor, has higher GTP-dependent kinase activity than ATP-dependent kinase activity. PIP4Ks negatively regulate insulin signaling through a catalytic-independent mechanism. They interact with PIP5Ks and suppress PIP5K-mediated PtdIns(4,5)P2 synthesis and insulin-dependent conversion to PtdIns(3,4,5)P3. The protein is Phosphatidylinositol 5-phosphate 4-kinase type-2 gamma of Mus musculus (Mouse).